Consider the following 204-residue polypeptide: Tumor protein D53 (204 aa).

Residues 1-31 form a disordered region; sequence MEAQAQGLLETEPLQGRDGDAVGSADFSSML. The stretch at 22-73 forms a coiled coil; sequence VGSADFSSMLSEEEKEELKAELIQLEDEITTLRQVLSAKERHLVEIKQKLGM. Serine 29, serine 86, serine 122, and serine 131 each carry phosphoserine. Arginine 133 carries the post-translational modification Omega-N-methylarginine. At threonine 146 the chain carries Phosphothreonine. Phosphoserine occurs at positions 149 and 174. A disordered region spans residues 164-204; the sequence is KVGGTNHGGGSFEEVLNSTAHASSQNASAGSRQTKDEELQC. The span at 179 to 195 shows a compositional bias: polar residues; the sequence is LNSTAHASSQNASAGSR.

Belongs to the TPD52 family. Forms a homodimer or heterodimer with other members of the family.

The polypeptide is Tumor protein D53 (Tpd52l1) (Mus musculus (Mouse)).